Reading from the N-terminus, the 139-residue chain is Peptide methionine sulfoxide reductase MsrB (139 aa).

The region spanning 14-137 (DEEWRRELTP…NSISLDFQPE (124 aa)) is the MsrB domain. Zn(2+) contacts are provided by Cys-53, Cys-56, Cys-102, and Cys-105. Cys-126 (nucleophile) is an active-site residue.

Belongs to the MsrB Met sulfoxide reductase family. Zn(2+) is required as a cofactor.

The enzyme catalyses L-methionyl-[protein] + [thioredoxin]-disulfide + H2O = L-methionyl-(R)-S-oxide-[protein] + [thioredoxin]-dithiol. The chain is Peptide methionine sulfoxide reductase MsrB from Leifsonia xyli subsp. xyli (strain CTCB07).